Here is a 374-residue protein sequence, read N- to C-terminus: UPF0754 membrane protein SAS1767 (374 aa).

The next 2 membrane-spanning stretches (helical) occupy residues 4 to 24 (LFIIIFMIVVGAIIGGITNVI) and 354 to 374 (SLGFILGGIIGFFQGLVAIFV).

This sequence belongs to the UPF0754 family.

The protein resides in the cell membrane. The protein is UPF0754 membrane protein SAS1767 of Staphylococcus aureus (strain MSSA476).